Here is a 245-residue protein sequence, read N- to C-terminus: UPF0246 protein LBUL_1917 (245 aa).

It belongs to the UPF0246 family.

This Lactobacillus delbrueckii subsp. bulgaricus (strain ATCC BAA-365 / Lb-18) protein is UPF0246 protein LBUL_1917.